Here is a 1238-residue protein sequence, read N- to C-terminus: Erythroid differentiation-related factor 1 (1238 aa).

4 disordered regions span residues 1–38 (MGDA…AQGS), 220–268 (QPVS…GSEP), 517–561 (PKKE…SDDS), and 620–647 (KKES…RGGP). Composition is skewed to low complexity over residues 9 to 38 (AEGP…AQGS), 223 to 241 (SSTA…NDSE), and 253 to 263 (SSVSEDPSASS). The span at 530–547 (NSDESYSEEEEEMPDSDE) shows a compositional bias: acidic residues. TPR repeat units follow at residues 693-726 (SKAY…HDTY) and 914-953 (AQAH…LGTR).

The protein resides in the nucleus. Transcription factor involved in erythroid differentiation. Involved in transcriptional activation of the globin gene. The polypeptide is Erythroid differentiation-related factor 1 (EDRF1) (Homo sapiens (Human)).